Consider the following 457-residue polypeptide: Argininosuccinate lyase (457 aa).

It belongs to the lyase 1 family. Argininosuccinate lyase subfamily.

It is found in the cytoplasm. The enzyme catalyses 2-(N(omega)-L-arginino)succinate = fumarate + L-arginine. The protein operates within amino-acid biosynthesis; L-arginine biosynthesis; L-arginine from L-ornithine and carbamoyl phosphate: step 3/3. This is Argininosuccinate lyase from Escherichia coli O7:K1 (strain IAI39 / ExPEC).